Reading from the N-terminus, the 105-residue chain is Large ribosomal subunit protein uL22 (105 aa).

The protein belongs to the universal ribosomal protein uL22 family. Part of the 50S ribosomal subunit.

In terms of biological role, this protein binds specifically to 23S rRNA; its binding is stimulated by other ribosomal proteins, e.g. L4, L17, and L20. It is important during the early stages of 50S assembly. It makes multiple contacts with different domains of the 23S rRNA in the assembled 50S subunit and ribosome. Functionally, the globular domain of the protein is located near the polypeptide exit tunnel on the outside of the subunit, while an extended beta-hairpin is found that lines the wall of the exit tunnel in the center of the 70S ribosome. In Sulfurimonas denitrificans (strain ATCC 33889 / DSM 1251) (Thiomicrospira denitrificans (strain ATCC 33889 / DSM 1251)), this protein is Large ribosomal subunit protein uL22.